Here is a 128-residue protein sequence, read N- to C-terminus: CD59 glycoprotein (128 aa).

The first 25 residues, 1–25 (MGIQGGSVLFGLLLVLAVFCHSGHS), serve as a signal peptide directing secretion. Residues 26-108 (LQCYNCPNPT…QLENGGTSLS (83 aa)) form the UPAR/Ly6 domain. 5 disulfide bridges follow: Cys-28-Cys-51, Cys-31-Cys-38, Cys-44-Cys-64, Cys-70-Cys-88, and Cys-89-Cys-94. Asn-43 carries an N-linked (GlcNAc...) asparagine glycan. A lipid anchor (GPI-anchor amidated asparagine) is attached at Asn-102. Residues 103–128 (GGTSLSEKTVVLLVTLLLAAAWCLHP) constitute a propeptide, removed in mature form.

In terms of assembly, interacts with T-cell surface antigen CD2. In terms of processing, N- and O-glycosylated.

Its subcellular location is the cell membrane. The protein localises to the secreted. In terms of biological role, potent inhibitor of the complement membrane attack complex (MAC) action, which protects self-cells from damage during complement activation. Acts by binding to the beta-haipins of C8 (C8A and C8B) components of the assembling MAC, forming an intermolecular beta-sheet that prevents incorporation of the multiple copies of C9 required for complete formation of the osmolytic pore. This chain is CD59 glycoprotein, found in Chlorocebus aethiops (Green monkey).